Here is a 193-residue protein sequence, read N- to C-terminus: dCTP deaminase (193 aa).

Residues 110 to 115 (RSSLAR), Asp128, 136 to 138 (VLE), Tyr171, Lys178, and Gln182 contribute to the dCTP site. Catalysis depends on Glu138, which acts as the Proton donor/acceptor. The segment at 169–193 (RPYNRRQDAKYKDQQGAVASRIDKD) is disordered.

Belongs to the dCTP deaminase family. In terms of assembly, homotrimer.

It carries out the reaction dCTP + H2O + H(+) = dUTP + NH4(+). Its pathway is pyrimidine metabolism; dUMP biosynthesis; dUMP from dCTP (dUTP route): step 1/2. Functionally, catalyzes the deamination of dCTP to dUTP. The polypeptide is dCTP deaminase (Pectobacterium atrosepticum (strain SCRI 1043 / ATCC BAA-672) (Erwinia carotovora subsp. atroseptica)).